We begin with the raw amino-acid sequence, 154 residues long: MIEVNIHTRGWYKLVGKPKTSAKRVIRFCLSELDITKYDPKVFVVLANDALLLELNSQYRGIHKATNVLSFSYEKLSPGCCLGEIYLSMERIAEESLEMDVAVRSHFFHMLIHGMLHILGYDHEEPEEAITMQALEVGLLAKLGIRNPYVPRET.

Positions 113, 117, and 123 each coordinate Zn(2+).

The protein belongs to the endoribonuclease YbeY family. Zn(2+) serves as cofactor.

It is found in the cytoplasm. Its function is as follows. Single strand-specific metallo-endoribonuclease involved in late-stage 70S ribosome quality control and in maturation of the 3' terminus of the 16S rRNA. This is Endoribonuclease YbeY from Anaplasma marginale (strain Florida).